We begin with the raw amino-acid sequence, 55 residues long: Large ribosomal subunit protein bL33 (55 aa).

Belongs to the bacterial ribosomal protein bL33 family.

The protein is Large ribosomal subunit protein bL33 of Orientia tsutsugamushi (strain Boryong) (Rickettsia tsutsugamushi).